The primary structure comprises 329 residues: NADH-quinone oxidoreductase subunit H (329 aa).

The next 9 helical transmembrane spans lie at 9 to 29, 42 to 62, 75 to 95, 117 to 137, 154 to 174, 188 to 208, 238 to 258, 269 to 291, and 309 to 329; these read LIKILILVAVFSALGGFATYI, GPSYVGPFGLLQVAADGIKLF, LIFTLAPIIAMVSAFVSMAPI, IGFLFFLAVGAAGIYAPILAG, IQLLSFEVVSTLTILAPLMVV, GGFLDWLVFKQPLAFILFLIA, LKWGMFFLAEYAHLFAFSFVI, WGFIPGGIAILIKVSFFVFLSMW, and WKIMLPLALLNIVLTGVIILI.

It belongs to the complex I subunit 1 family. As to quaternary structure, NDH-1 is composed of 14 different subunits. Subunits NuoA, H, J, K, L, M, N constitute the membrane sector of the complex.

The protein resides in the cell inner membrane. The enzyme catalyses a quinone + NADH + 5 H(+)(in) = a quinol + NAD(+) + 4 H(+)(out). Functionally, NDH-1 shuttles electrons from NADH, via FMN and iron-sulfur (Fe-S) centers, to quinones in the respiratory chain. The immediate electron acceptor for the enzyme in this species is believed to be ubiquinone. Couples the redox reaction to proton translocation (for every two electrons transferred, four hydrogen ions are translocated across the cytoplasmic membrane), and thus conserves the redox energy in a proton gradient. This subunit may bind ubiquinone. The chain is NADH-quinone oxidoreductase subunit H from Helicobacter acinonychis (strain Sheeba).